A 307-amino-acid polypeptide reads, in one-letter code: GTPase Era (307 aa).

Residues arginine 7–lysine 181 enclose the Era-type G domain. A G1 region spans residues glycine 15 to serine 22. Residue glycine 15–serine 22 participates in GTP binding. Residues glutamine 41–asparagine 45 are G2. A G3 region spans residues aspartate 62–glycine 65. Residues aspartate 62 to leucine 66 and asparagine 130 to aspartate 133 contribute to the GTP site. The segment at asparagine 130–aspartate 133 is G4. A G5 region spans residues isoleucine 160 to alanine 162. Residues leucine 212 to glutamate 290 enclose the KH type-2 domain.

Belongs to the TRAFAC class TrmE-Era-EngA-EngB-Septin-like GTPase superfamily. Era GTPase family. As to quaternary structure, monomer.

The protein resides in the cytoplasm. The protein localises to the cell inner membrane. Functionally, an essential GTPase that binds both GDP and GTP, with rapid nucleotide exchange. Plays a role in 16S rRNA processing and 30S ribosomal subunit biogenesis and possibly also in cell cycle regulation and energy metabolism. The protein is GTPase Era of Desulfovibrio desulfuricans (strain ATCC 27774 / DSM 6949 / MB).